The chain runs to 386 residues: tRNA-specific adenosine deaminase subunit tad2 (386 aa).

Residues 212-322 form the CMP/dCMP-type deaminase domain; sequence TQHETYMKLA…GNDRFGGCGS (111 aa). Position 263 (H263) interacts with Zn(2+). E265 serves as the catalytic Proton donor. 2 residues coordinate Zn(2+): C293 and C296.

Belongs to the cytidine and deoxycytidylate deaminase family. ADAT2 subfamily. As to quaternary structure, heterodimer with Tad3. Zn(2+) serves as cofactor.

The catalysed reaction is adenosine(34) in tRNA + H2O + H(+) = inosine(34) in tRNA + NH4(+). Functionally, structural subunit of tRNA-specific adenosine deaminase, which deaminates adenosine-34 (the first, also called wobble position of the anticodon) to inosine in many tRNAs. Inosine-34 allows the decoding of 3 different nucleotides at the third position of mRNA codons, as inosine is able to pair with U, C, and A. The wobble inosine tRNA modification is essential for cell cycle progression in the G1/S and G2/M transitions in fission yeast. In Schizosaccharomyces pombe (strain 972 / ATCC 24843) (Fission yeast), this protein is tRNA-specific adenosine deaminase subunit tad2 (tad2).